A 79-amino-acid polypeptide reads, in one-letter code: Pulmonary surfactant-associated protein B (79 aa).

The region spanning 4-79 (PLPFCWLCRT…VCGLVLRCSS (76 aa)) is the Saposin B-type domain. 3 cysteine pairs are disulfide-bonded: Cys-8-Cys-77, Cys-11-Cys-71, and Cys-35-Cys-46.

Homodimer; disulfide-linked.

The protein localises to the secreted. Its subcellular location is the extracellular space. The protein resides in the surface film. Its function is as follows. Pulmonary surfactant-associated proteins promote alveolar stability by lowering the surface tension at the air-liquid interface in the peripheral air spaces. SP-B increases the collapse pressure of palmitic acid to nearly 70 millinewtons per meter. This Sus scrofa (Pig) protein is Pulmonary surfactant-associated protein B (SFTPB).